The primary structure comprises 23 residues: Coenzyme PQQ synthesis protein A (23 aa).

Positions 15 to 19 (EVTLY) form a cross-link, pyrroloquinoline quinone (Glu-Tyr).

The protein belongs to the PqqA family.

It participates in cofactor biosynthesis; pyrroloquinoline quinone biosynthesis. In terms of biological role, required for coenzyme pyrroloquinoline quinone (PQQ) biosynthesis. PQQ is probably formed by cross-linking a specific glutamate to a specific tyrosine residue and excising these residues from the peptide. The chain is Coenzyme PQQ synthesis protein A from Pseudomonas aeruginosa (strain UCBPP-PA14).